Reading from the N-terminus, the 150-residue chain is Large ribosomal subunit protein bL9 (150 aa).

The protein belongs to the bacterial ribosomal protein bL9 family.

Functionally, binds to the 23S rRNA. This chain is Large ribosomal subunit protein bL9, found in Corynebacterium kroppenstedtii (strain DSM 44385 / JCM 11950 / CIP 105744 / CCUG 35717).